The sequence spans 92 residues: Conotoxin Mr15.2 (92 aa).

The signal sequence occupies residues 1–20; sequence MSTLKMMLLILLLLLPMATF. Positions 21-53 are excised as a propeptide; the sequence is DSDGQAIPGGGIPSAVNSRVGGDEKSGRSLEKR. Positions 30–49 are disordered; it reads GGIPSAVNSRVGGDEKSGRS.

The protein belongs to the conotoxin N superfamily. In terms of processing, contains 4 disulfide bonds. Expressed by the venom duct.

The protein resides in the secreted. This is Conotoxin Mr15.2 from Conus marmoreus (Marble cone).